The primary structure comprises 273 residues: Phosphatidylglycerol--prolipoprotein diacylglyceryl transferase (273 aa).

The next 7 membrane-spanning stretches (helical) occupy residues 21 to 41, 60 to 80, 95 to 115, 124 to 144, 176 to 196, 203 to 223, and 236 to 256; these read ISVR…LWLA, LLFA…VLFY, VWTG…AMLW, FFGV…MGRM, SQLY…NWFI, GSVS…VEYV, and FISM…LMMV. Residue Arg143 coordinates a 1,2-diacyl-sn-glycero-3-phospho-(1'-sn-glycerol).

This sequence belongs to the Lgt family.

It is found in the cell inner membrane. It carries out the reaction L-cysteinyl-[prolipoprotein] + a 1,2-diacyl-sn-glycero-3-phospho-(1'-sn-glycerol) = an S-1,2-diacyl-sn-glyceryl-L-cysteinyl-[prolipoprotein] + sn-glycerol 1-phosphate + H(+). It functions in the pathway protein modification; lipoprotein biosynthesis (diacylglyceryl transfer). In terms of biological role, catalyzes the transfer of the diacylglyceryl group from phosphatidylglycerol to the sulfhydryl group of the N-terminal cysteine of a prolipoprotein, the first step in the formation of mature lipoproteins. The sequence is that of Phosphatidylglycerol--prolipoprotein diacylglyceryl transferase from Vibrio atlanticus (strain LGP32) (Vibrio splendidus (strain Mel32)).